The sequence spans 285 residues: MIYPDETMLYAPVEWHDCSEGYTDIRYEKSTDGIAKITINRPQVRNAFRPLTVKEMIQALADARYDDNVGVIILTGEGDKAFCAGGDQKVRGDYGGYQDDSGVHHLNVLDFQRQIRTCPKPVVAMVAGYSIGGGHVLHMMCDLTIAAENAIFGQTGPKVGSFDGGWGASYMARIVGQKKAREIWFLCRQYDAQQALDMGLVNTVVPLADLEKETVRWCREMLQNSPMALRCLKAALNADCDGQAGLQELAGNATMLFYMTEEGQEGRNAFNQKRQPDFSKFKRNP.

Residues R45, 84-88 (AGGDQ), Y97, 129-133 (YSIGG), T155, S161, Y258, and K273 each bind substrate. 154 to 156 (QTG) contacts hydrogencarbonate.

It belongs to the enoyl-CoA hydratase/isomerase family. MenB subfamily. As to quaternary structure, homohexamer. Hydrogencarbonate serves as cofactor.

It carries out the reaction 2-succinylbenzoyl-CoA + H(+) = 1,4-dihydroxy-2-naphthoyl-CoA + H2O. It functions in the pathway quinol/quinone metabolism; 1,4-dihydroxy-2-naphthoate biosynthesis; 1,4-dihydroxy-2-naphthoate from chorismate: step 6/7. The protein operates within quinol/quinone metabolism; menaquinone biosynthesis. Converts o-succinylbenzoyl-CoA (OSB-CoA) to 1,4-dihydroxy-2-naphthoyl-CoA (DHNA-CoA). The polypeptide is 1,4-dihydroxy-2-naphthoyl-CoA synthase (Salmonella typhimurium (strain LT2 / SGSC1412 / ATCC 700720)).